The primary structure comprises 154 residues: MYKLQLLSCIALTLALVANSAPTLSSTKDTKKQLEPLLLDLQFLLKEVNNYENLKLSRMLTFKFYMPKKATELKHLQCLMEELKPLEEVLNLAQSKNSHLTNIKDSMNNINLTVSELKGSETGFTCEYDDETVTVVEFLNKWITFCQSIYSTMT.

Positions 1 to 20 (MYKLQLLSCIALTLALVANS) are cleaved as a signal peptide. An O-linked (GalNAc...) threonine glycan is attached at T23. The cysteines at positions 78 and 126 are disulfide-linked.

The protein belongs to the IL-2 family.

Its subcellular location is the secreted. Its function is as follows. Cytokine produced by activated CD4-positive helper T-cells and to a lesser extend activated CD8-positive T-cells and natural killer (NK) cells that plays pivotal roles in the immune response and tolerance. Binds to a receptor complex composed of either the high-affinity trimeric IL-2R (IL2RA/CD25, IL2RB/CD122 and IL2RG/CD132) or the low-affinity dimeric IL-2R (IL2RB and IL2RG). Interaction with the receptor leads to oligomerization and conformation changes in the IL-2R subunits resulting in downstream signaling starting with phosphorylation of JAK1 and JAK3. In turn, JAK1 and JAK3 phosphorylate the receptor to form a docking site leading to the phosphorylation of several substrates including STAT5. This process leads to activation of several pathways including STAT, phosphoinositide-3-kinase/PI3K and mitogen-activated protein kinase/MAPK pathways. Functions as a T-cell growth factor and can increase NK-cell cytolytic activity as well. Promotes strong proliferation of activated B-cells and subsequently immunoglobulin production. Plays a pivotal role in regulating the adaptive immune system by controlling the survival and proliferation of regulatory T-cells, which are required for the maintenance of immune tolerance. Moreover, participates in the differentiation and homeostasis of effector T-cell subsets, including Th1, Th2, Th17 as well as memory CD8-positive T-cells. This is Interleukin-2 (IL2) from Lama glama (Llama).